Reading from the N-terminus, the 630-residue chain is MASPEGTDGEGMGCCGWFQVEAIVERKTGDTISDDESEEENETDTDVDGFIDNTLINNTQEDRETAQQLLQVQTAHADAQTLQKLKRKYIGSPLSDISNQQTVYREEVKRRLILSEDSGYGNTLETLETSQQVEYEKGNGCGSSQNGGSQNSNCSEHSVSNMDIDTNMETPTHQLQELFKSSNVQGRLHFKFKEVYGVPYTELVRTFKSDSTCCNDWICAIFGVNETLAEALKTILKPQCVYYHMQCLTCSWGVIVMMLIRYICGKNRKTITKSLSSILNVPQEQMLIQPPKLRSPAVALYFYKTAMSNISEVYGETPEWIQRQTQLQHSLQDNQFELSKMVQWAFDNEVTDDSQIAFLYAQLADIDSNAQAFLKSNMQAKYVKDCGIMCRHYKRAQQQQMNMCQWIKHICSKVDEGGDWKPIVQFLRYQGVDFISFLSYFKLFLQGTPKHNCLVLCGPPNTGKSCFAMSLINFFQGSVISFVNSQSHFWLQPLDNAKLGLLDDATDTCWRYIDDYLRNLLDGNPISLDRKHKQLVQIKCPPVIITTNVNPMQDAKLRYLHSRISVFKFENPFPLDNNGNPVYELSNVNWKCFFERTWSRLNLDNDEDKENNGDSIPTFRCVPEQNTRLL.

The disordered stretch occupies residues 26–46 (RKTGDTISDDESEEENETDTD). A compositionally biased stretch (acidic residues) spans 32 to 46 (ISDDESEEENETDTD). The short motif at 86–88 (KRK) is the Nuclear localization signal element. The residue at position 92 (Ser92) is a Phosphoserine; by host. Positions 136–166 (EKGNGCGSSQNGGSQNSNCSEHSVSNMDIDT) are disordered. A compositionally biased stretch (low complexity) spans 142-155 (GSSQNGGSQNSNCS). Over residues 156-166 (EHSVSNMDIDT) the composition is skewed to polar residues. Residues 167–333 (NMETPTHQLQ…QTQLQHSLQD (167 aa)) are DNA-binding region. An SF3 helicase domain is found at 432 to 582 (VDFISFLSYF…FPLDNNGNPV (151 aa)). 458–465 (GPPNTGKS) contributes to the ATP binding site. Lys539 participates in a covalent cross-link: Glycyl lysine isopeptide (Lys-Gly) (interchain with G-Cter in SUMO).

It belongs to the papillomaviridae E1 protein family. As to quaternary structure, can form hexamers. Interacts with E2 protein; this interaction increases E1 DNA binding specificity. Interacts with host DNA polymerase subunit POLA2. Interacts with host single stranded DNA-binding protein RPA1. Interacts with host TOP1; this interaction stimulates the enzymatic activity of TOP1. In terms of processing, phosphorylated. Sumoylated.

The protein localises to the host nucleus. It carries out the reaction Couples ATP hydrolysis with the unwinding of duplex DNA by translocating in the 3'-5' direction.. It catalyses the reaction ATP + H2O = ADP + phosphate + H(+). Its function is as follows. ATP-dependent DNA 3'-5' helicase required for initiation of viral DNA replication. It forms a complex with the viral E2 protein. The E1-E2 complex binds to the replication origin which contains binding sites for both proteins. During the initial step, a dimer of E1 interacts with a dimer of protein E2 leading to a complex that binds the viral origin of replication with high specificity. Then, a second dimer of E1 displaces the E2 dimer in an ATP-dependent manner to form the E1 tetramer. Following this, two E1 monomers are added to each half of the site, which results in the formation of two E1 trimers on the viral ori. Subsequently, two hexamers will be created. The double hexamer acts as a bi-directional helicase machinery and unwinds the viral DNA and then recruits the host DNA polymerase to start replication. The chain is Replication protein E1 from Homo sapiens (Human).